The primary structure comprises 471 residues: Neuraminidase (471 aa).

The Intravirion segment spans residues 1-6 (MNPNQK). The chain crosses the membrane as a helical span at residues 7-27 (LFALSGVAIALSVMNLLIGIS). The interval 11–33 (SGVAIALSVMNLLIGISNVGLNV) is involved in apical transport and lipid raft association. Residues 28-471 (NVGLNVSLHL…PDGAQIQYFS (444 aa)) are Virion surface-facing. 7 N-linked (GlcNAc...) asparagine; by host glycosylation sites follow: N32, N47, N56, N57, N67, N68, and N87. Residues 36–87 (HLKEKGTKQEENLTCTTITQNNTTVVENTYVNNTTIITKEPDLKAPSYLLLN) form a hypervariable stalk region region. Residues 90 to 471 (LCSVEGWVVI…PDGAQIQYFS (382 aa)) form a head of neuraminidase region. Cystine bridges form between C91-C419, C123-C128, C183-C230, C232-C237, C278-C291, C280-C289, C318-C336, and C423-C450. R117 provides a ligand contact to substrate. N-linked (GlcNAc...) asparagine; by host glycosylation occurs at N145. D150 functions as the Proton donor/acceptor in the catalytic mechanism. Residue R151 coordinates substrate. N-linked (GlcNAc...) asparagine; by host glycans are attached at residues N200 and N234. Residue 276–277 (EE) participates in substrate binding. R292 lines the substrate pocket. The Ca(2+) site is built by D293, G297, and D324. A substrate-binding site is contributed by R371. N401 carries an N-linked (GlcNAc...) asparagine; by host glycan. The active-site Nucleophile is Y405.

This sequence belongs to the glycosyl hydrolase 34 family. Homotetramer. It depends on Ca(2+) as a cofactor. Post-translationally, N-glycosylated.

It localises to the virion membrane. It is found in the host apical cell membrane. It catalyses the reaction Hydrolysis of alpha-(2-&gt;3)-, alpha-(2-&gt;6)-, alpha-(2-&gt;8)- glycosidic linkages of terminal sialic acid residues in oligosaccharides, glycoproteins, glycolipids, colominic acid and synthetic substrates.. With respect to regulation, inhibited by the neuraminidase inhibitors zanamivir (Relenza) and oseltamivir (Tamiflu). These drugs interfere with the release of progeny virus from infected cells and are effective against all influenza strains. Resistance to neuraminidase inhibitors is quite rare. Catalyzes the removal of terminal sialic acid residues from viral and cellular glycoconjugates. Cleaves off the terminal sialic acids on the glycosylated HA during virus budding to facilitate virus release. Additionally helps virus spread through the circulation by further removing sialic acids from the cell surface. These cleavages prevent self-aggregation and ensure the efficient spread of the progeny virus from cell to cell. Otherwise, infection would be limited to one round of replication. Described as a receptor-destroying enzyme because it cleaves a terminal sialic acid from the cellular receptors. May facilitate viral invasion of the upper airways by cleaving the sialic acid moieties on the mucin of the airway epithelial cells. Likely to plays a role in the budding process through its association with lipid rafts during intracellular transport. May additionally display a raft-association independent effect on budding. Plays a role in the determination of host range restriction on replication and virulence. Sialidase activity in late endosome/lysosome traffic seems to enhance virus replication. The polypeptide is Neuraminidase (Influenza A virus (strain A/Duck/Germany/1949 H10N7)).